A 67-amino-acid polypeptide reads, in one-letter code: Large ribosomal subunit protein bL31 (67 aa).

Residues Cys16, Cys18, Cys36, and Cys39 each coordinate Zn(2+).

The protein belongs to the bacterial ribosomal protein bL31 family. Type A subfamily. In terms of assembly, part of the 50S ribosomal subunit. Requires Zn(2+) as cofactor.

Functionally, binds the 23S rRNA. This Treponema pallidum (strain Nichols) protein is Large ribosomal subunit protein bL31.